The following is a 149-amino-acid chain: uncharacterized protein (149 aa).

This is an uncharacterized protein from Archaeoglobus fulgidus (strain ATCC 49558 / DSM 4304 / JCM 9628 / NBRC 100126 / VC-16).